Here is a 152-residue protein sequence, read N- to C-terminus: Endoribonuclease YbeY (152 aa).

Zn(2+) is bound by residues H113, H117, and H123.

This sequence belongs to the endoribonuclease YbeY family. It depends on Zn(2+) as a cofactor.

Its subcellular location is the cytoplasm. Its function is as follows. Single strand-specific metallo-endoribonuclease involved in late-stage 70S ribosome quality control and in maturation of the 3' terminus of the 16S rRNA. The protein is Endoribonuclease YbeY of Acidovorax ebreus (strain TPSY) (Diaphorobacter sp. (strain TPSY)).